The following is a 324-amino-acid chain: Serpentine receptor class gamma-10 (324 aa).

8 helical membrane passes run 39 to 59 (SSYLIVGAVLNVMIVYTVFHG), 69 to 89 (MLYCADAIVGIYINTAEVIFG), 91 to 111 (IFIYITPLCPIASPYFFTPSI), 128 to 146 (TFSQIFMSFNRMTCVIFLM), 155 to 175 (ILKPVLIITFILPLGVIWKIL), 206 to 226 (LFHFTLCFVLVIIFFVATILG), 246 to 266 (MIMAVQTVTFASIQIYFVFFA), and 279 to 299 (IVSFVFDSLYVFSPIALIVMS).

Belongs to the nematode receptor-like protein srg family.

It localises to the membrane. The sequence is that of Serpentine receptor class gamma-10 (srg-10) from Caenorhabditis elegans.